The following is a 393-amino-acid chain: Acetylornithine aminotransferase (393 aa).

Pyridoxal 5'-phosphate-binding positions include 96 to 97 (GT) and F129. N(2)-acetyl-L-ornithine is bound at residue R132. 214-217 (DEVQ) contributes to the pyridoxal 5'-phosphate binding site. Position 243 is an N6-(pyridoxal phosphate)lysine (K243). S271 is a binding site for N(2)-acetyl-L-ornithine. Position 272 (T272) interacts with pyridoxal 5'-phosphate.

Belongs to the class-III pyridoxal-phosphate-dependent aminotransferase family. ArgD subfamily. In terms of assembly, homodimer. It depends on pyridoxal 5'-phosphate as a cofactor.

It localises to the cytoplasm. It catalyses the reaction N(2)-acetyl-L-ornithine + 2-oxoglutarate = N-acetyl-L-glutamate 5-semialdehyde + L-glutamate. It functions in the pathway amino-acid biosynthesis; L-arginine biosynthesis; N(2)-acetyl-L-ornithine from L-glutamate: step 4/4. The chain is Acetylornithine aminotransferase from Rhodobacter capsulatus (strain ATCC BAA-309 / NBRC 16581 / SB1003).